The chain runs to 206 residues: Holliday junction branch migration complex subunit RuvA (206 aa).

The tract at residues 1 to 68 is domain I; that stretch reads MITFVRGMLA…EDAMQLFGFL (68 aa). Residues 69-147 form a domain II region; the sequence is EPGERELFGQ…KWREESGLSA (79 aa). The flexible linker stretch occupies residues 147–151; it reads AMGAR. The interval 152–206 is domain III; sequence ASSRVYEEVELALLALGFAPGEVVRALDAVAPAMAGEEQTEAWLRAAIAWLSEQG.

It belongs to the RuvA family. In terms of assembly, homotetramer. Forms an RuvA(8)-RuvB(12)-Holliday junction (HJ) complex. HJ DNA is sandwiched between 2 RuvA tetramers; dsDNA enters through RuvA and exits via RuvB. An RuvB hexamer assembles on each DNA strand where it exits the tetramer. Each RuvB hexamer is contacted by two RuvA subunits (via domain III) on 2 adjacent RuvB subunits; this complex drives branch migration. In the full resolvosome a probable DNA-RuvA(4)-RuvB(12)-RuvC(2) complex forms which resolves the HJ.

Its subcellular location is the cytoplasm. In terms of biological role, the RuvA-RuvB-RuvC complex processes Holliday junction (HJ) DNA during genetic recombination and DNA repair, while the RuvA-RuvB complex plays an important role in the rescue of blocked DNA replication forks via replication fork reversal (RFR). RuvA specifically binds to HJ cruciform DNA, conferring on it an open structure. The RuvB hexamer acts as an ATP-dependent pump, pulling dsDNA into and through the RuvAB complex. HJ branch migration allows RuvC to scan DNA until it finds its consensus sequence, where it cleaves and resolves the cruciform DNA. In Gloeobacter violaceus (strain ATCC 29082 / PCC 7421), this protein is Holliday junction branch migration complex subunit RuvA.